The primary structure comprises 447 residues: Protein CLT1, chloroplastic (447 aa).

A chloroplast-targeting transit peptide spans 1 to 48 (MATTSSDRLIAGLTASIGSIESRYANPAQSVSLICRNQINGAPPIVLR). Helical transmembrane passes span 103 to 123 (MEIVIAAATTAALGVGNRVLY), 135 to 155 (FFLAQLSTFGYVAVYFSILYF), 172 to 192 (LPFLIVGVLESLALAAGMAAA), 200 to 220 (TTVLSQTFLVWQILFSIIFLG), 228 to 248 (ILGCTLVAFGVIVSVASGSGA), 256 to 276 (GILWSLLMVFSFLLQGADTVM), 304 to 324 (IFQVICIALLLPFLSKLWGIP), 351 to 371 (GAPLLPVMFVMMNMAYNISLL), 387 to 407 (TVSVPIAVYCFTLPLPYLGVA), and 413 to 433 (GFVAGTIILVVGMLLYAWTPS).

This sequence belongs to the CRT-like transporter family.

Its subcellular location is the plastid. It localises to the chloroplast membrane. In terms of biological role, involved in thiol transport from the plastid to the cytosol. Transports probably both glutathione (GSH) and its precursor, gamma-glutamylcysteine (gamma-EC). Exhibits some functional redundancy with CLT3 in maintaining the root GSH pool. This chain is Protein CLT1, chloroplastic, found in Arabidopsis thaliana (Mouse-ear cress).